The primary structure comprises 228 residues: Lipoprotein LpqN (228 aa).

An N-terminal signal peptide occupies residues 1–19 (MKHFTAAVATVALSLALAG). Cysteine 20 is lipidated: N-palmitoyl cysteine. Cysteine 20 carries the S-diacylglycerol cysteine lipid modification. Positions 26 to 53 (TDSAPTTSPTTTSPTTSTTTTSATTSAQ) are disordered. Positions 28–52 (SAPTTSPTTTSPTTSTTTTSATTSA) are enriched in low complexity.

In terms of assembly, interacts with the periplasmic loop domains of the mycolate transporters MmpL3 and MmpL11. Also interacts with secreted cell envelope biosynthetic enzymes such as Ag85A. These interactions are weak and may require a putative mycobacterial adapter protein or molecule. Interacts with human ubiquitin ligase CBL.

The protein localises to the cell membrane. Its subcellular location is the secreted. Functionally, involved in cell envelope biogenesis. May act as a membrane fusion protein, connecting MmpL transporters with periplasmic proteins, and play a role in cell envelope lipid changes during biofilm maturation. In terms of biological role, is also a virulence factor required for intracellular survival. Associates with CBL, a host ubiquitin ligase, and probably blocks the normal functions of CBL and disturbs CBL-mediated antibacterial activity. Interaction counteracts antibacterial defense but causes a reciprocal enhancement of antiviral defense. The polypeptide is Lipoprotein LpqN (Mycobacterium tuberculosis (strain ATCC 25618 / H37Rv)).